A 51-amino-acid polypeptide reads, in one-letter code: Large ribosomal subunit protein eL39 (51 aa).

The segment at 32–51 is disordered; sequence KRRVTRSPARRHWRRQKLKA.

Belongs to the eukaryotic ribosomal protein eL39 family.

The polypeptide is Large ribosomal subunit protein eL39 (Pyrobaculum calidifontis (strain DSM 21063 / JCM 11548 / VA1)).